We begin with the raw amino-acid sequence, 201 residues long: Adenylyl-sulfate kinase (201 aa).

Residue 35-42 participates in ATP binding; it reads GLSGSGKS. The active-site Phosphoserine intermediate is serine 109.

It belongs to the APS kinase family.

The enzyme catalyses adenosine 5'-phosphosulfate + ATP = 3'-phosphoadenylyl sulfate + ADP + H(+). The protein operates within sulfur metabolism; hydrogen sulfide biosynthesis; sulfite from sulfate: step 2/3. Functionally, catalyzes the synthesis of activated sulfate. This Citrobacter koseri (strain ATCC BAA-895 / CDC 4225-83 / SGSC4696) protein is Adenylyl-sulfate kinase.